Reading from the N-terminus, the 234-residue chain is Chalcone--flavanone isomerase 1 (234 aa).

Residues T50, N115, and S192 each contribute to the substrate site.

The protein belongs to the chalcone isomerase family.

It catalyses the reaction a chalcone = a flavanone.. It participates in secondary metabolite biosynthesis; flavonoid biosynthesis. In terms of biological role, catalyzes the intramolecular cyclization of bicyclic chalcones into tricyclic (S)-flavanones. Responsible for the isomerization of 4,2',4',6'-tetrahydroxychalcone (also termed chalcone) into naringenin. The sequence is that of Chalcone--flavanone isomerase 1 (CHI1) from Vitis vinifera (Grape).